The chain runs to 471 residues: UDP-N-acetylmuramoylalanine--D-glutamate ligase (471 aa).

Position 122–128 (122–128 (GSNAKST)) interacts with ATP.

This sequence belongs to the MurCDEF family.

It is found in the cytoplasm. It catalyses the reaction UDP-N-acetyl-alpha-D-muramoyl-L-alanine + D-glutamate + ATP = UDP-N-acetyl-alpha-D-muramoyl-L-alanyl-D-glutamate + ADP + phosphate + H(+). It participates in cell wall biogenesis; peptidoglycan biosynthesis. Its function is as follows. Cell wall formation. Catalyzes the addition of glutamate to the nucleotide precursor UDP-N-acetylmuramoyl-L-alanine (UMA). The polypeptide is UDP-N-acetylmuramoylalanine--D-glutamate ligase (Psychrobacter cryohalolentis (strain ATCC BAA-1226 / DSM 17306 / VKM B-2378 / K5)).